Consider the following 749-residue polypeptide: Transcription factor RFX3 (749 aa).

Residues 183-258 constitute a DNA-binding region (RFX-type winged-helix); sequence HLQWLLDNYE…YHYYGIRVKP (76 aa). A disordered region spans residues 663-699; it reads VSPGNLDKDEGSEVESEMDEELDDSSEPQAKREKTEL. The segment covering 674–688 has biased composition (acidic residues); it reads SEVESEMDEELDDSS.

The protein belongs to the RFX family. As to quaternary structure, heterodimer; heterodimerizes with RFX1 and RFX2, and RFX6.

The protein resides in the nucleus. Its function is as follows. Transcription factor required for ciliogenesis and islet cell differentiation during endocrine pancreas development. Essential for the differentiation of nodal monocilia and left-right asymmetry specification during embryogenesis. Required for the biogenesis of motile cilia by governing growth and beating efficiency of motile cells. Also required for ciliated ependymal cell differentiation. Regulates the expression of genes involved in ciliary assembly (DYNC2LI1, FOXJ1 and BBS4) and genes involved in ciliary motility (DNAH11, DNAH9 and DNAH5). Together with RFX6, participates in the differentiation of 4 of the 5 islet cell types during endocrine pancreas development, with the exception of pancreatic PP (polypeptide-producing) cells. Regulates transcription by forming a heterodimer with another RFX protein and binding to the X-box in the promoter of target genes. Represses transcription of MAP1A in non-neuronal cells but not in neuronal cells. The sequence is that of Transcription factor RFX3 (RFX3) from Macaca fascicularis (Crab-eating macaque).